The chain runs to 301 residues: Acetylglutamate kinase (301 aa).

Substrate contacts are provided by residues 68-69, Arg90, and Asn195; that span reads GG.

The protein belongs to the acetylglutamate kinase family. ArgB subfamily.

The protein localises to the cytoplasm. The enzyme catalyses N-acetyl-L-glutamate + ATP = N-acetyl-L-glutamyl 5-phosphate + ADP. It participates in amino-acid biosynthesis; L-arginine biosynthesis; N(2)-acetyl-L-ornithine from L-glutamate: step 2/4. Its function is as follows. Catalyzes the ATP-dependent phosphorylation of N-acetyl-L-glutamate. This is Acetylglutamate kinase from Pseudomonas aeruginosa (strain LESB58).